The primary structure comprises 401 residues: MEGNKSMQREKIDRPMKRGPEQNSLSPPLAKCPFMSCSSLKTLHSLYQGSFPFYRLPSEVGHFSLDENRQYHQDNRKLRYYSPPVGIREKGSPGWNVMDGYESHYVRRNEDEKEGLLHILTWLEKNRGVLGAHVEGGSKRPIDRDFVTWRGHLTKILCTPYETQEGWLLAVTLFKGTFYISEQETEAAQKKRKERSLEQERLMYSGYKFESYICADSPDRQPSQSAVVNTNEGFCSVLLARLTSHSLLISGEVDCTDPSAKKSIPPTCYIELKSSAQIRNPHQQRSFNRYKLLKWWCQSFLLGIPIIVAGFRSPEGRIVSLETFKTSDIPHLVRGERNSWDPAVCMNFCNKFLSHIKSVVTRDDPRLVYLFAWEPGCDVTFTVHTDPEYTILPSWYVNSVN.

Residues 1–27 (MEGNKSMQREKIDRPMKRGPEQNSLSP) are disordered. Residues 7-20 (MQREKIDRPMKRGP) show a composition bias toward basic and acidic residues. Residues arginine 69, glutamate 114, and 149 to 151 (WRG) contribute to the substrate site. Residue glutamate 210 coordinates Mg(2+). Residues cysteine 235 and glutamate 252 each coordinate substrate. 4 residues coordinate Mg(2+): glutamate 252, aspartate 254, glutamate 271, and leucine 272. The substrate site is built by lysine 273 and glutamine 298.

The protein belongs to the DXO/Dom3Z family. Requires Mg(2+) as cofactor.

The protein resides in the nucleus. The catalysed reaction is a 5'-end triphospho-ribonucleoside in mRNA + H2O = a 5'-end phospho-ribonucleoside in mRNA + diphosphate + H(+). The enzyme catalyses a 5'-end NAD(+)-phospho-ribonucleoside in mRNA + H2O = a 5'-end phospho-ribonucleoside in mRNA + NAD(+) + H(+). It catalyses the reaction a 5'-end NAD(+)-phospho-ribonucleoside in snoRNA + H2O = a 5'-end phospho-ribonucleoside in snoRNA + NAD(+) + H(+). It carries out the reaction a 5'-end (N(7)-methyl 5'-triphosphoguanosine)-ribonucleoside-ribonucleotide in mRNA + H2O = a (N(7)-methyl 5'-triphosphoguanosine)-nucleoside + a 5'-end phospho-ribonucleoside in mRNA + H(+). The catalysed reaction is a 5'-end FAD-phospho-ribonucleoside in mRNA + H2O = a 5'-end phospho-ribonucleoside in mRNA + FAD + H(+). The enzyme catalyses a 5'-end CoA-ribonucleoside in mRNA + H2O = 3'-dephospho-CoA + a 5'-end phospho-ribonucleoside in mRNA + H(+). Decapping enzyme for NAD-capped RNAs: specifically hydrolyzes the nicotinamide adenine dinucleotide (NAD) cap from a subset of RNAs by removing the entire NAD moiety from the 5'-end of an NAD-capped RNA. The NAD-cap is present at the 5'-end of some RNAs and snoRNAs. In contrast to the canonical 5'-end N7 methylguanosine (m7G) cap, the NAD cap promotes mRNA decay. Also acts as a non-canonical decapping enzyme that removes the entire cap structure of m7G capped or incompletely capped RNAs and mediates their subsequent degradation. Specifically degrades pre-mRNAs with a defective 5'-end m7G cap and is part of a pre-mRNA capping quality control. Has decapping activity toward incomplete 5'-end m7G cap mRNAs such as unmethylated 5'-end-capped RNA (cap0), while it has no activity toward 2'-O-ribose methylated m7G cap (cap1). Also has 5'-3' exoribonuclease activities: The 5'-end monophosphate RNA is then degraded by the 5'-3' exoribonuclease activity, enabling this enzyme to decap and degrade incompletely capped mRNAs. Also possesses RNA 5'-pyrophosphohydrolase activity by hydrolyzing the 5'-end triphosphate to release pyrophosphates. Exhibits decapping activity towards FAD-capped RNAs. Exhibits decapping activity towards dpCoA-capped RNAs in vitro. The polypeptide is Decapping and exoribonuclease protein (Xenopus laevis (African clawed frog)).